We begin with the raw amino-acid sequence, 102 residues long: Small ribosomal subunit protein uS10 (102 aa).

Belongs to the universal ribosomal protein uS10 family. In terms of assembly, part of the 30S ribosomal subunit.

Involved in the binding of tRNA to the ribosomes. The protein is Small ribosomal subunit protein uS10 of Bifidobacterium longum subsp. infantis (strain ATCC 15697 / DSM 20088 / JCM 1222 / NCTC 11817 / S12).